A 311-amino-acid chain; its full sequence is HPr kinase/phosphorylase (311 aa).

Active-site residues include His139 and Lys160. 154-161 (GESGVGKS) contributes to the ATP binding site. Ser161 is a binding site for Mg(2+). Catalysis depends on Asp178, which acts as the Proton acceptor; for phosphorylation activity. Proton donor; for dephosphorylation activity. Residues 202–211 (IEIRGIGILD) form an important for the catalytic mechanism of both phosphorylation and dephosphorylation region. Glu203 contributes to the Mg(2+) binding site. Residue Arg244 is part of the active site. An important for the catalytic mechanism of dephosphorylation region spans residues 265–270 (PVRPGR).

It belongs to the HPrK/P family. In terms of assembly, homohexamer. Mg(2+) is required as a cofactor.

It catalyses the reaction [HPr protein]-L-serine + ATP = [HPr protein]-O-phospho-L-serine + ADP + H(+). The enzyme catalyses [HPr protein]-O-phospho-L-serine + phosphate + H(+) = [HPr protein]-L-serine + diphosphate. Its function is as follows. Catalyzes the ATP- as well as the pyrophosphate-dependent phosphorylation of a specific serine residue in HPr, a phosphocarrier protein of the phosphoenolpyruvate-dependent sugar phosphotransferase system (PTS). HprK/P also catalyzes the pyrophosphate-producing, inorganic phosphate-dependent dephosphorylation (phosphorolysis) of seryl-phosphorylated HPr (P-Ser-HPr). The two antagonistic activities of HprK/P are regulated by several intracellular metabolites, which change their concentration in response to the absence or presence of rapidly metabolisable carbon sources (glucose, fructose, etc.) in the growth medium. Therefore, by controlling the phosphorylation state of HPr, HPrK/P is a sensor enzyme that plays a major role in the regulation of carbon metabolism and sugar transport: it mediates carbon catabolite repression (CCR), and regulates PTS-catalyzed carbohydrate uptake and inducer exclusion. This Caldicellulosiruptor bescii (strain ATCC BAA-1888 / DSM 6725 / KCTC 15123 / Z-1320) (Anaerocellum thermophilum) protein is HPr kinase/phosphorylase.